Consider the following 358-residue polypeptide: Bis(monoacylglycero)phosphate synthase CLN5 (358 aa).

Positions 1–23 (MAQVGSAGPGACGRRGAGAGAGP) are disordered. Over 1–29 (MAQVGSAGPGACGRRGAGAGAGPERTTWR) the chain is Cytoplasmic. The span at 7 to 21 (AGPGACGRRGAGAGA) shows a compositional bias: gly residues. The helical; Signal-anchor for type II membrane protein transmembrane segment at 30 to 46 (WAPALLWLATAAAVAGD) threads the bilayer. The Lumenal portion of the chain corresponds to 47-358 (PSRRQWPVPY…NRKNRTLSGL (312 aa)). 2 cysteine pairs are disulfide-bonded: C69–C158 and C76–C164. The active-site Proton acceptor is H116. N-linked (GlcNAc...) asparagine glycosylation is found at N129, N142, N177, and N202. C230 functions as the Nucleophile; Acyl-thioester intermediate in the catalytic mechanism. N254, N270, and N280 each carry an N-linked (GlcNAc...) asparagine glycan. Residues 303 to 342 (FLLSLLQIFDAVVIHREFYLFYNFEYWFLPMKYPFIKITY) form a membrane-anchoring region. N352 carries an N-linked (GlcNAc...) asparagine glycan.

It belongs to the CLN5 family. Multimer. Interacts with SORT1, RAB5A and RAB7A. Interacts with PPT1, TPP1, CLN3, CLN6, CLN8, ATP5F1A and ATP5F1B. Post-translationally, N-glycosylated with both high mannose and complex type sugars. Glycosylation is important for proper folding and trafficking to the lysosomes. In terms of processing, the type II membrane signal anchor is proteolytically cleaved to produce a mature form that is transported to the lysosomes (Bis(monoacylglycero)phosphate synthase CLN5, secreted form). Can undergo proteolytic cleavage at the C-terminus, probably by a cysteine protease and may involve the removal of approximately 10-15 residues from the C-terminal end.

The protein localises to the lysosome. Its subcellular location is the membrane. It carries out the reaction S-hexadecanoyl-L-cysteinyl-[protein] + H2O = L-cysteinyl-[protein] + hexadecanoate + H(+). It catalyses the reaction 2 1-acyl-sn-glycero-3-phospho-(1'-sn-glycerol) = 1-acyl-sn-glycero-3-phospho-(3'-acyl-sn-1'-glycerol) + sn-glycero-3-phospho-(1'-sn-glycerol). The enzyme catalyses 2 1-(9Z-octadecenoyl)-sn-glycero-3-phospho-(1'-sn-glycerol) = 1-(9Z-octadecenoyl)-sn-glycero-3-phospho-(3'-(9Z-octadecenoyl)-1'-sn-glycerol) + sn-glycero-3-phospho-(1'-sn-glycerol). The catalysed reaction is 2 1-octadecanoyl-sn-glycero-3-phospho-(1'-sn-glycerol) = 1-octadecanoyl-sn-glycero-3-phospho-(3'-octadecanoyl-1'-sn-glycerol) + sn-glycero-3-phospho-(1'-sn-glycerol). It carries out the reaction 2 1-hexadecanoyl-sn-glycero-3-phospho-(1'-sn-glycerol) = 1-hexadecanoyl-sn-glycero-3-phospho-(3'-hexadecanoyl-1'-sn-glycerol) + sn-glycero-3-phospho-(1'-sn-glycerol). It catalyses the reaction 2 1-tetradecanoyl-sn-glycero-3-phospho-(1'-sn-glycerol) = 1-tetradecanoyl-sn-glycero-3-phospho-(3'-tetradecanoyl-1'-sn-glycerol) + sn-glycero-3-phospho-(1'-sn-glycerol). Functionally, catalyzes the synthesis of bis(monoacylglycero)phosphate (BMP) via transacylation of 2 molecules of lysophosphatidylglycerol (LPG). BMP also known as lysobisphosphatidic acid plays a key role in the formation of intraluminal vesicles and in maintaining intracellular cholesterol homeostasis. Can use only LPG as the exclusive lysophospholipid acyl donor for base exchange and displays BMP synthase activity towards various LPGs (LPG 14:0, LPG 16:0, LPG 18:0, LPG 18:1) with a higher preference for longer chain lengths. Plays a role in influencing the retrograde trafficking of lysosomal sorting receptors SORT1 and IGF2R from the endosomes to the trans-Golgi network by controlling the recruitment of retromer complex to the endosomal membrane. Regulates the localization and activation of RAB7A which is required to recruit the retromer complex to the endosomal membrane. Its function is as follows. Exhibits palmitoyl protein thioesterase (S-depalmitoylation) activity in vitro and most likely plays a role in protein S-depalmitoylation. The chain is Bis(monoacylglycero)phosphate synthase CLN5 (CLN5) from Bos taurus (Bovine).